We begin with the raw amino-acid sequence, 276 residues long: 4-hydroxy-tetrahydrodipicolinate reductase (276 aa).

Residues 10–15 (GALGKM), aspartate 36, and 109–111 (GTT) contribute to the NAD(+) site. Histidine 165 functions as the Proton donor/acceptor in the catalytic mechanism. Histidine 166 contacts (S)-2,3,4,5-tetrahydrodipicolinate. Catalysis depends on lysine 169, which acts as the Proton donor. 175 to 176 (GT) contacts (S)-2,3,4,5-tetrahydrodipicolinate.

The protein belongs to the DapB family.

It is found in the cytoplasm. The enzyme catalyses (S)-2,3,4,5-tetrahydrodipicolinate + NAD(+) + H2O = (2S,4S)-4-hydroxy-2,3,4,5-tetrahydrodipicolinate + NADH + H(+). The catalysed reaction is (S)-2,3,4,5-tetrahydrodipicolinate + NADP(+) + H2O = (2S,4S)-4-hydroxy-2,3,4,5-tetrahydrodipicolinate + NADPH + H(+). It functions in the pathway amino-acid biosynthesis; L-lysine biosynthesis via DAP pathway; (S)-tetrahydrodipicolinate from L-aspartate: step 4/4. Its function is as follows. Catalyzes the conversion of 4-hydroxy-tetrahydrodipicolinate (HTPA) to tetrahydrodipicolinate. The polypeptide is 4-hydroxy-tetrahydrodipicolinate reductase (Prochlorococcus marinus (strain SARG / CCMP1375 / SS120)).